A 298-amino-acid polypeptide reads, in one-letter code: N-acetylmuramic acid 6-phosphate etherase (298 aa).

An SIS domain is found at 55–218 (IHAQVSGGGR…STGLMIKSGK (164 aa)). Catalysis depends on Glu83, which acts as the Proton donor. The active site involves Glu114.

Belongs to the GCKR-like family. MurNAc-6-P etherase subfamily. Homodimer.

It carries out the reaction N-acetyl-D-muramate 6-phosphate + H2O = N-acetyl-D-glucosamine 6-phosphate + (R)-lactate. It functions in the pathway amino-sugar metabolism; 1,6-anhydro-N-acetylmuramate degradation. Its pathway is amino-sugar metabolism; N-acetylmuramate degradation. It participates in cell wall biogenesis; peptidoglycan recycling. Functionally, specifically catalyzes the cleavage of the D-lactyl ether substituent of MurNAc 6-phosphate, producing GlcNAc 6-phosphate and D-lactate. Together with AnmK, is also required for the utilization of anhydro-N-acetylmuramic acid (anhMurNAc) either imported from the medium or derived from its own cell wall murein, and thus plays a role in cell wall recycling. This is N-acetylmuramic acid 6-phosphate etherase from Escherichia coli O17:K52:H18 (strain UMN026 / ExPEC).